The primary structure comprises 412 residues: Alanyl-tRNA editing protein Aarsd1 (412 aa).

2 residues coordinate Zn(2+): H109 and H113. Residue S174 is modified to Phosphoserine. C209 and H213 together coordinate Zn(2+).

Belongs to the class-II aminoacyl-tRNA synthetase family. Alax-L subfamily. The cofactor is Zn(2+).

The protein localises to the cytoplasm. In terms of biological role, functions in trans to edit the amino acid moiety from incorrectly charged Ser-tRNA(Ala). The polypeptide is Alanyl-tRNA editing protein Aarsd1 (Aarsd1) (Mus musculus (Mouse)).